A 428-amino-acid polypeptide reads, in one-letter code: Serine--tRNA ligase (428 aa).

L-serine is bound at residue 231 to 233 (TAE). 262 to 264 (RSE) lines the ATP pocket. Position 285 (E285) interacts with L-serine. Residue 349-352 (EISS) participates in ATP binding. L-serine is bound at residue S385.

This sequence belongs to the class-II aminoacyl-tRNA synthetase family. Type-1 seryl-tRNA synthetase subfamily. Homodimer. The tRNA molecule binds across the dimer.

Its subcellular location is the cytoplasm. The enzyme catalyses tRNA(Ser) + L-serine + ATP = L-seryl-tRNA(Ser) + AMP + diphosphate + H(+). It carries out the reaction tRNA(Sec) + L-serine + ATP = L-seryl-tRNA(Sec) + AMP + diphosphate + H(+). Its pathway is aminoacyl-tRNA biosynthesis; selenocysteinyl-tRNA(Sec) biosynthesis; L-seryl-tRNA(Sec) from L-serine and tRNA(Sec): step 1/1. Catalyzes the attachment of serine to tRNA(Ser). Is also able to aminoacylate tRNA(Sec) with serine, to form the misacylated tRNA L-seryl-tRNA(Sec), which will be further converted into selenocysteinyl-tRNA(Sec). The chain is Serine--tRNA ligase from Staphylococcus epidermidis (strain ATCC 35984 / DSM 28319 / BCRC 17069 / CCUG 31568 / BM 3577 / RP62A).